The primary structure comprises 254 residues: Probable transcriptional regulatory protein MAE_13580 (254 aa).

It belongs to the TACO1 family.

It is found in the cytoplasm. In Microcystis aeruginosa (strain NIES-843 / IAM M-2473), this protein is Probable transcriptional regulatory protein MAE_13580.